The primary structure comprises 256 residues: 4-oxalocrotonate decarboxylase (256 aa).

This sequence belongs to the hydratase/decarboxylase family. Forms a complex with AmnF. Requires Mg(2+) as cofactor. Mn(2+) is required as a cofactor.

It catalyses the reaction (3E)-2-oxohex-3-enedioate + H(+) = 2-oxopent-4-enoate + CO2. Its activity is regulated as follows. Strongly inhibited by Fe(2+), Fe(3+), K(3)[Fe(CN)(6)], Ag(+) and Cu(2+). Functionally, involved in the modified meta-cleavage pathway for the 2-aminophenol catabolism. This is 4-oxalocrotonate decarboxylase (amnE) from Pseudomonas sp.